A 261-amino-acid polypeptide reads, in one-letter code: Cytochrome c oxidase subunit 3 (261 aa).

The Mitochondrial matrix segment spans residues 1–15; the sequence is MTHQTHAYHMVNPSP. The chain crosses the membrane as a helical span at residues 16–34; the sequence is WPLTGALSALLMTFGLIMW. Residues 35-40 lie on the Mitochondrial intermembrane side of the membrane; sequence FHFNST. Residues 41-66 form a helical membrane-spanning segment; that stretch reads ALLMLGLTTNMLTMYQWWRDIIREST. Residues 67–72 lie on the Mitochondrial matrix side of the membrane; it reads FQGHHT. A helical transmembrane segment spans residues 73–105; that stretch reads PVVQKGLRYGMILFIISEVLFFTGFFWAFYHSS. Topologically, residues 106–128 are mitochondrial intermembrane; it reads LAPTPELGGCWPPTGIHPLNPLE. A helical membrane pass occupies residues 129–152; it reads VPLLNTSVLLASGVSITWAHHSLM. Residues 153 to 155 are Mitochondrial matrix-facing; that stretch reads EGH. Residues 156-183 form a helical membrane-spanning segment; it reads RNHMLQALFITIALGVYFTLLQASEYYE. Over 184–190 the chain is Mitochondrial intermembrane; the sequence is APFTISD. The chain crosses the membrane as a helical span at residues 191 to 223; sequence GVYGSTFFVATGFHGLHVIIGSTFLIVCFFRQL. Residues 224–232 lie on the Mitochondrial matrix side of the membrane; sequence KFHFTSSHH. The chain crosses the membrane as a helical span at residues 233–256; sequence FGFEAAAWYWHFVDVVWLFLYVSI. Residues 257-261 lie on the Mitochondrial intermembrane side of the membrane; it reads YWWGS.

The protein belongs to the cytochrome c oxidase subunit 3 family. As to quaternary structure, component of the cytochrome c oxidase (complex IV, CIV), a multisubunit enzyme composed of 14 subunits. The complex is composed of a catalytic core of 3 subunits MT-CO1, MT-CO2 and MT-CO3, encoded in the mitochondrial DNA, and 11 supernumerary subunits COX4I, COX5A, COX5B, COX6A, COX6B, COX6C, COX7A, COX7B, COX7C, COX8 and NDUFA4, which are encoded in the nuclear genome. The complex exists as a monomer or a dimer and forms supercomplexes (SCs) in the inner mitochondrial membrane with NADH-ubiquinone oxidoreductase (complex I, CI) and ubiquinol-cytochrome c oxidoreductase (cytochrome b-c1 complex, complex III, CIII), resulting in different assemblies (supercomplex SCI(1)III(2)IV(1) and megacomplex MCI(2)III(2)IV(2)).

The protein resides in the mitochondrion inner membrane. It carries out the reaction 4 Fe(II)-[cytochrome c] + O2 + 8 H(+)(in) = 4 Fe(III)-[cytochrome c] + 2 H2O + 4 H(+)(out). Functionally, component of the cytochrome c oxidase, the last enzyme in the mitochondrial electron transport chain which drives oxidative phosphorylation. The respiratory chain contains 3 multisubunit complexes succinate dehydrogenase (complex II, CII), ubiquinol-cytochrome c oxidoreductase (cytochrome b-c1 complex, complex III, CIII) and cytochrome c oxidase (complex IV, CIV), that cooperate to transfer electrons derived from NADH and succinate to molecular oxygen, creating an electrochemical gradient over the inner membrane that drives transmembrane transport and the ATP synthase. Cytochrome c oxidase is the component of the respiratory chain that catalyzes the reduction of oxygen to water. Electrons originating from reduced cytochrome c in the intermembrane space (IMS) are transferred via the dinuclear copper A center (CU(A)) of subunit 2 and heme A of subunit 1 to the active site in subunit 1, a binuclear center (BNC) formed by heme A3 and copper B (CU(B)). The BNC reduces molecular oxygen to 2 water molecules using 4 electrons from cytochrome c in the IMS and 4 protons from the mitochondrial matrix. This Tragelaphus oryx (Eland) protein is Cytochrome c oxidase subunit 3 (MT-CO3).